Consider the following 180-residue polypeptide: ATP synthase subunit delta (180 aa).

Belongs to the ATPase delta chain family. As to quaternary structure, F-type ATPases have 2 components, F(1) - the catalytic core - and F(0) - the membrane proton channel. F(1) has five subunits: alpha(3), beta(3), gamma(1), delta(1), epsilon(1). CF(0) has four main subunits: a(1), b(1), b'(1) and c(10-14). The alpha and beta chains form an alternating ring which encloses part of the gamma chain. F(1) is attached to F(0) by a central stalk formed by the gamma and epsilon chains, while a peripheral stalk is formed by the delta, b and b' chains.

It is found in the cellular thylakoid membrane. F(1)F(0) ATP synthase produces ATP from ADP in the presence of a proton or sodium gradient. F-type ATPases consist of two structural domains, F(1) containing the extramembraneous catalytic core and F(0) containing the membrane proton channel, linked together by a central stalk and a peripheral stalk. During catalysis, ATP synthesis in the catalytic domain of F(1) is coupled via a rotary mechanism of the central stalk subunits to proton translocation. Its function is as follows. This protein is part of the stalk that links CF(0) to CF(1). It either transmits conformational changes from CF(0) to CF(1) or is implicated in proton conduction. This Prochlorococcus marinus (strain MIT 9215) protein is ATP synthase subunit delta.